The following is a 193-amino-acid chain: dTTP/UTP pyrophosphatase (193 aa).

The Proton acceptor role is filled by aspartate 77.

This sequence belongs to the Maf family. YhdE subfamily. It depends on a divalent metal cation as a cofactor.

It localises to the cytoplasm. It carries out the reaction dTTP + H2O = dTMP + diphosphate + H(+). The enzyme catalyses UTP + H2O = UMP + diphosphate + H(+). Functionally, nucleoside triphosphate pyrophosphatase that hydrolyzes dTTP and UTP. May have a dual role in cell division arrest and in preventing the incorporation of modified nucleotides into cellular nucleic acids. The protein is dTTP/UTP pyrophosphatase of Bacteroides fragilis (strain YCH46).